The sequence spans 528 residues: Capsule biosynthesis protein CapD proenzyme (528 aa).

Positions 1–26 (MNSFKWGKKIILFCLIVSLMGGIGVS) are cleaved as a signal peptide. Residue Thr352 is the Nucleophile of the active site. Poly-gamma-D-glutamate is bound by residues Thr352, 429–432 (GGNR), and Arg520.

The protein belongs to the gamma-glutamyltransferase family. In terms of assembly, this enzyme consists of two polypeptide chains, which are synthesized in precursor form from a single polypeptide. In terms of processing, cleaved by autocatalysis into a large and a small subunit.

It functions in the pathway capsule biogenesis; capsule polysaccharide biosynthesis. Transpeptidase that cleaves the poly-gamma-D-glutamate capsule and catalyzes the formation of an amide bond with the side-chain amino group of meso-diaminopimelic acid (m-DAP) in the peptidoglycan scaffold. Degradation of the high-molecular weight capsule (H-capsule) to the lower-molecular weight capsule (L-capsule), which is released from the bacterial cell surface. The production of L-capsule is essential to mediate escape from host defenses. The polypeptide is Capsule biosynthesis protein CapD proenzyme (capD) (Bacillus anthracis).